The primary structure comprises 913 residues: Cadherin-4 (913 aa).

The signal sequence occupies residues 1-19 (MRTGSRLLLVLLVWGSAAA). The propeptide occupies 20–166 (LNGDLTVRPT…SAKGLRRQKR (147 aa)). 5 Cadherin domains span residues 167-274 (DWVI…RPEF), 275-389 (INQV…PPEF), 390-504 (TTST…APYF), 505-610 (PTNH…DNAP), and 611-721 (ELLP…TIGA). Residues 167–731 (DWVIPPINVP…VAAAGLGTGA (565 aa)) are Extracellular-facing. Residues N280, N409, N554, N629, N658, and N699 are each glycosylated (N-linked (GlcNAc...) asparagine). Residues 732-753 (IIAILICIIILLTMVLLFVVWM) traverse the membrane as a helical segment. The Cytoplasmic portion of the chain corresponds to 754–913 (KRREKERHTK…ADMYGGGEED (160 aa)).

Embryonic brain and neuronal retina.

The protein localises to the cell membrane. Functionally, cadherins are calcium-dependent cell adhesion proteins. They preferentially interact with themselves in a homophilic manner in connecting cells; cadherins may thus contribute to the sorting of heterogeneous cell types. May play an important role in retinal development. The protein is Cadherin-4 (CDH4) of Gallus gallus (Chicken).